The chain runs to 123 residues: MDRVPFCCLLFIGLLNPLLSLPVTDTGERTLQLPVLEEDALRALEELERMALLQTLRQTMGTEAGESPGEAGPSTETPTPRGSMRKAFAGQNSNTVLSRLLARTRKQHKQHGAAPECFWKYCI.

Positions 1–20 (MDRVPFCCLLFIGLLNPLLS) are cleaved as a signal peptide. Propeptides lie at residues 21–104 (LPVT…LART) and 107–109 (QHK). Positions 57–88 (RQTMGTEAGESPGEAGPSTETPTPRGSMRKAF) are disordered. A disulfide bridge links C117 with C122.

It belongs to the urotensin-2 family. In terms of tissue distribution, brain specific. Predominantly expressed in motoneurons of the brainstem and spinal cord.

Its subcellular location is the secreted. Highly potent vasoconstrictor. The sequence is that of Urotensin-2 (Uts2) from Mus musculus (Mouse).